Here is a 475-residue protein sequence, read N- to C-terminus: Ammonium transporter Rh type C (475 aa).

Over 1 to 20 (MGCVQSFRNFCDRPKNTNVR) the chain is Cytoplasmic. A helical membrane pass occupies residues 21-41 (ISLPAVCFVWQIAMIILFGVF). Over 42–73 (IRYNEEADTHWVEYRKKENISSDIENDFYFRY) the chain is Extracellular. Asn-60 is a glycosylation site (N-linked (GlcNAc...) asparagine). The chain crosses the membrane as a helical span at residues 74-94 (PSFQDVHVMIFVGFGFLMTFL). At 95–98 (KRYS) the chain is on the cytoplasmic side. A helical transmembrane segment spans residues 99 to 119 (FGAVGFNFLIAAFGLQWALLM). Over 120–138 (QGWFHSLDYTDGKIKIGIE) the chain is Extracellular. Residues 139–159 (NLINADFCVAGCLIAYGAVLG) traverse the membrane as a helical segment. The Cytoplasmic segment spans residues 160–167 (KVSPVQLM). Residues 168–188 (VLTLFGITLFAVEEYIILNLI) form a helical membrane-spanning segment. Residues 189–193 (HARDA) lie on the Extracellular side of the membrane. A helical membrane pass occupies residues 194–214 (GGSMVIHTFGGYYGLSISWML). Topologically, residues 215-233 (YRPNLEQSSNLQGSVYQSD) are cytoplasmic. Residues 234 to 254 (VFAMIGTLFLWMFWPSFNSAI) form a helical membrane-spanning segment. The Extracellular segment spans residues 255–265 (TDHGDGQHRAA). A helical transmembrane segment spans residues 266 to 286 (INTYLALASTVLTTVAISSLF). Topologically, residues 287-299 (QKHGKLDMVHIQN) are cytoplasmic. The chain crosses the membrane as a helical span at residues 300–320 (STLAGGVAVGTAAEFMLMPYG). Residue Ser-321 is a topological domain, extracellular. Residues 322 to 342 (LIVGFCCGIISTLGYIYLTPF) form a helical membrane-spanning segment. Over 343–357 (MEKYLKIQDTCGIHN) the chain is Cytoplasmic. The helical transmembrane segment at 358–378 (LHAMPGLIGGIVGAITAAAAT) threads the bilayer. At 379–410 (ESVYGKEGLVNTFDFVGPFKNMVPTTQGGHQA) the chain is on the extracellular side. The chain crosses the membrane as a helical span at residues 411–431 (AGLCVAICFGIGGGIMVGCIL). Over 432–475 (RLPIWCDPADDNCFNDEPYWELPEEEEIIPPILHYNNHMVNKDV) the chain is Cytoplasmic.

The protein belongs to the ammonium transporter (TC 2.A.49) family. Rh subfamily. As to quaternary structure, homotrimer.

The protein localises to the apical cell membrane. Functions as an ammonia transporter. May play a role in the elimination of ammonia in the gill. This is Ammonium transporter Rh type C (rhcg) from Tetraodon nigroviridis (Spotted green pufferfish).